Here is a 354-residue protein sequence, read N- to C-terminus: uncharacterized protein (354 aa).

Residues 43–63 (LIAVTLWSCVGSLLFICLLAV) traverse the membrane as a helical segment.

The protein localises to the cell membrane. This is an uncharacterized protein from Bacillus subtilis (strain 168).